We begin with the raw amino-acid sequence, 498 residues long: Galactose-1-phosphate uridylyltransferase (498 aa).

This sequence belongs to the galactose-1-phosphate uridylyltransferase type 2 family.

Its subcellular location is the cytoplasm. The enzyme catalyses alpha-D-galactose 1-phosphate + UDP-alpha-D-glucose = alpha-D-glucose 1-phosphate + UDP-alpha-D-galactose. It participates in carbohydrate metabolism; galactose metabolism. This chain is Galactose-1-phosphate uridylyltransferase, found in Clostridium perfringens (strain SM101 / Type A).